Reading from the N-terminus, the 181-residue chain is Isopentenyl-diphosphate Delta-isomerase (181 aa).

Mn(2+)-binding residues include histidine 25 and histidine 32. The 135-residue stretch at 30–164 (PLHLAFSCWL…PWAFSPWMVM (135 aa)) folds into the Nudix hydrolase domain. The active site involves cysteine 67. Cysteine 67 contributes to the Mg(2+) binding site. Histidine 69 lines the Mn(2+) pocket. Glutamate 87 contributes to the Mg(2+) binding site. Mn(2+) contacts are provided by glutamate 114 and glutamate 116. Glutamate 116 is a catalytic residue.

The protein belongs to the IPP isomerase type 1 family. In terms of assembly, homodimer. The cofactor is Mg(2+). It depends on Mn(2+) as a cofactor.

It localises to the cytoplasm. The catalysed reaction is isopentenyl diphosphate = dimethylallyl diphosphate. It participates in isoprenoid biosynthesis; dimethylallyl diphosphate biosynthesis; dimethylallyl diphosphate from isopentenyl diphosphate: step 1/1. Catalyzes the 1,3-allylic rearrangement of the homoallylic substrate isopentenyl (IPP) to its highly electrophilic allylic isomer, dimethylallyl diphosphate (DMAPP). This chain is Isopentenyl-diphosphate Delta-isomerase, found in Salmonella typhi.